The following is a 61-amino-acid chain: Sec-independent protein translocase protein TatA (61 aa).

A helical transmembrane segment spans residues 1-21; it reads MFGIGMPEMLIILVIILIIFG.

This sequence belongs to the TatA/E family. The Tat system comprises two distinct complexes: a TatABC complex, containing multiple copies of TatA, TatB and TatC subunits, and a separate TatA complex, containing only TatA subunits. Substrates initially bind to the TatABC complex, which probably triggers association of the separate TatA complex to form the active translocon.

Its subcellular location is the cell inner membrane. In terms of biological role, part of the twin-arginine translocation (Tat) system that transports large folded proteins containing a characteristic twin-arginine motif in their signal peptide across membranes. TatA could form the protein-conducting channel of the Tat system. The sequence is that of Sec-independent protein translocase protein TatA from Syntrophus aciditrophicus (strain SB).